Here is a 297-residue protein sequence, read N- to C-terminus: Phosphate import ATP-binding protein PstB (297 aa).

An ABC transporter domain is found at 50 to 292 (MRLRDVEVFY…PEHDLTEAYI (243 aa)). 82-89 (GPSGCGKS) contributes to the ATP binding site.

The protein belongs to the ABC transporter superfamily. Phosphate importer (TC 3.A.1.7) family. As to quaternary structure, the complex is composed of two ATP-binding proteins (PstB), two transmembrane proteins (PstC and PstA) and a solute-binding protein (PstS).

The protein localises to the cell inner membrane. It catalyses the reaction phosphate(out) + ATP + H2O = ADP + 2 phosphate(in) + H(+). Part of the ABC transporter complex PstSACB involved in phosphate import. Responsible for energy coupling to the transport system. This is Phosphate import ATP-binding protein PstB from Alcanivorax borkumensis (strain ATCC 700651 / DSM 11573 / NCIMB 13689 / SK2).